Reading from the N-terminus, the 275-residue chain is Putative carbamate hydrolase RutD (275 aa).

One can recognise an AB hydrolase-1 domain in the interval 15–116; that stretch reads TVVLSSGLGG…SLVVINGWTV (102 aa).

This sequence belongs to the AB hydrolase superfamily. Hydrolase RutD family.

It carries out the reaction carbamate + 2 H(+) = NH4(+) + CO2. Its function is as follows. Involved in pyrimidine catabolism. May facilitate the hydrolysis of carbamate, a reaction that can also occur spontaneously. The sequence is that of Putative carbamate hydrolase RutD from Pantoea ananatis (strain LMG 20103).